Consider the following 549-residue polypeptide: Rhodopsin kinase grk7a (549 aa).

S33 bears the Phosphoserine mark. The RGS domain maps to 53–171 (FESLCEKQPI…QASPFFDKFL (119 aa)). Positions 186–449 (FYEFRTLGKG…NDDPRKHEWF (264 aa)) constitute a Protein kinase domain. ATP-binding positions include 192–200 (LGKGGFGEV) and K215. Residue D311 is the Proton acceptor of the active site. Residues 450–515 (KSINFARLEA…GAVSIAWQQE (66 aa)) enclose the AGC-kinase C-terminal domain. A disordered region spans residues 522–549 (FDELSDPNRKESSGGSDDDKKSGTCTLL). The segment covering 527–543 (DPNRKESSGGSDDDKKS) has biased composition (basic and acidic residues). At C546 the chain carries Cysteine methyl ester. C546 is lipidated: S-geranylgeranyl cysteine. Residues 547 to 549 (TLL) constitute a propeptide, removed in mature form.

Belongs to the protein kinase superfamily. AGC Ser/Thr protein kinase family. GPRK subfamily. Phosphorylation at Ser-33 is regulated by light and activated by cAMP.

Its subcellular location is the membrane. It carries out the reaction L-threonyl-[rhodopsin] + ATP = O-phospho-L-threonyl-[rhodopsin] + ADP + H(+). The enzyme catalyses L-seryl-[rhodopsin] + ATP = O-phospho-L-seryl-[rhodopsin] + ADP + H(+). Its function is as follows. Retina-specific kinase involved in the shutoff of the photoresponse and adaptation to changing light conditions via cone opsin phosphorylation, including rhodopsin (RHO). This Danio rerio (Zebrafish) protein is Rhodopsin kinase grk7a (grk7a).